The following is a 71-amino-acid chain: NAD(P)H-quinone oxidoreductase subunit O (71 aa).

Belongs to the complex I NdhO subunit family. NDH-1 can be composed of about 15 different subunits; different subcomplexes with different compositions have been identified which probably have different functions.

The protein resides in the cellular thylakoid membrane. It carries out the reaction a plastoquinone + NADH + (n+1) H(+)(in) = a plastoquinol + NAD(+) + n H(+)(out). It catalyses the reaction a plastoquinone + NADPH + (n+1) H(+)(in) = a plastoquinol + NADP(+) + n H(+)(out). NDH-1 shuttles electrons from an unknown electron donor, via FMN and iron-sulfur (Fe-S) centers, to quinones in the respiratory and/or the photosynthetic chain. The immediate electron acceptor for the enzyme in this species is believed to be plastoquinone. Couples the redox reaction to proton translocation, and thus conserves the redox energy in a proton gradient. Cyanobacterial NDH-1 also plays a role in inorganic carbon-concentration. The chain is NAD(P)H-quinone oxidoreductase subunit O from Microcystis aeruginosa (strain NIES-843 / IAM M-2473).